The following is a 336-amino-acid chain: MGLIARVRKEWFIIGIVLVITFAKLQPSVGVKGGPLHPEITITYVAVSVIFFNSGLSLKTEELASALMHVKLHFFVQTFTLVFFPIAIWLLLKVLALTAINEWLLRGLQTVACMPPPVSSAVILTKAVGGNEAAAIFNSAFGSFLGIVVTPLLLLVFLGSSSSVPFTSIFSQLFMTVVVPLIVGQVCRRFLRECLDRRKPPFGAVSSVVLLMIIYSTFCDTFNNPNIELDHLSLLTVVFIIFSIQLSFMALIFFLSTRKSSGFSAADSVAIMFCATHKSLTLGIPMLKIVFEGYEHLSLISVPLLIYHPAQILLGSVLLPSIKTWMSGRQKTLTPI.

Over 1-10 (MGLIARVRKE) the chain is Cytoplasmic. A helical membrane pass occupies residues 11-31 (WFIIGIVLVITFAKLQPSVGV). At 32 to 37 (KGGPLH) the chain is on the extracellular side. Residues 38–58 (PEITITYVAVSVIFFNSGLSL) form a helical membrane-spanning segment. Residues 59 to 71 (KTEELASALMHVK) lie on the Cytoplasmic side of the membrane. Residues 72 to 92 (LHFFVQTFTLVFFPIAIWLLL) traverse the membrane as a helical segment. The Extracellular portion of the chain corresponds to 93–116 (KVLALTAINEWLLRGLQTVACMPP). Residues 117 to 137 (PVSSAVILTKAVGGNEAAAIF) traverse the membrane as a helical segment. Asn138 is a topological domain (cytoplasmic). The chain crosses the membrane as a helical span at residues 139 to 159 (SAFGSFLGIVVTPLLLLVFLG). Topologically, residues 160–163 (SSSS) are extracellular. A helical membrane pass occupies residues 164–184 (VPFTSIFSQLFMTVVVPLIVG). The Cytoplasmic segment spans residues 185–201 (QVCRRFLRECLDRRKPP). A helical transmembrane segment spans residues 202–222 (FGAVSSVVLLMIIYSTFCDTF). The Extracellular portion of the chain corresponds to 223–233 (NNPNIELDHLS). The helical transmembrane segment at 234–254 (LLTVVFIIFSIQLSFMALIFF) threads the bilayer. The Cytoplasmic segment spans residues 255–270 (LSTRKSSGFSAADSVA). Residues 271–291 (IMFCATHKSLTLGIPMLKIVF) traverse the membrane as a helical segment. The Extracellular segment spans residues 292–298 (EGYEHLS). Residues 299 to 319 (LISVPLLIYHPAQILLGSVLL) traverse the membrane as a helical segment. At 320 to 336 (PSIKTWMSGRQKTLTPI) the chain is on the cytoplasmic side.

This sequence belongs to the bile acid:sodium symporter (BASS) (TC 2.A.28) family.

Its subcellular location is the cell membrane. It localises to the endoplasmic reticulum membrane. The protein localises to the golgi apparatus membrane. Its function is as follows. Involved in teeth and skeletal development. Has an essential role in the biosynthesis and trafficking of glycosaminoglycans and glycoproteins to produce a proper functioning extracellular matrix. Required for extracellular matrix mineralization. Also involved in the regulation of cellular calcium homeostasis. Does not show transport activity towards bile acids or steroid sulfates. This is Sodium/bile acid cotransporter 7 (slc10a7) from Danio rerio (Zebrafish).